A 437-amino-acid polypeptide reads, in one-letter code: MKKKSAPTPLPPETANTSPAPIGATAGIRVENCYVFKSRLQEYAQKAGLQTPEYHTSKEGPSHEPVFKSTVVINNTSYGSLPGFSNRKAAEQSAAEVALMEIVKSIPANANIPAVQETGLCKNLLQEYAQKMNYAIPSYICTKPASGLAPFLCTVEIGGIQYIGAAARTKKDAEIKAARTALLAIQGQSEGSANGATKYIVVPGKRVGKEVEKRPIETPKPLKAKKGGFKKKWNKRKFMKKDGQAVDVEKDEARVAGDAHDSDVLMQPTVITQEASCGTLFLQPCEEAKRVEDEPPRDIEMVQPDKENQHSDAALVQPDDEARVEQEPSRDISVVQPNEEAISAKQEPSIDAATLQPKEEAMKTGCVALVLCLNISVDPPDVIKISPCVRKECWIDPFSMAAPKALETIGKTLHSQYERWQPKARYKLQLDPTLEEV.

Residues 1 to 22 are disordered; sequence MKKKSAPTPLPPETANTSPAPI. 2 consecutive DRBM domains span residues 35 to 104 and 120 to 187; these read VFKS…EIVK and LCKN…AIQG. Composition is skewed to basic and acidic residues over residues 288–310 and 320–330; these read AKRV…ENQH and DEARVEQEPSR. Positions 288–331 are disordered; the sequence is AKRVEDEPPRDIEMVQPDKENQHSDAALVQPDDEARVEQEPSRD.

Functionally, binds double-stranded RNA. This Oryza sativa subsp. japonica (Rice) protein is Double-stranded RNA-binding protein 3 (DRB3).